Consider the following 527-residue polypeptide: Bifunctional purine biosynthesis protein PurH (527 aa).

In terms of domain architecture, MGS-like spans 1-149 (MASDFLPVRR…KNFARVAVAT (149 aa)).

Belongs to the PurH family.

The enzyme catalyses (6R)-10-formyltetrahydrofolate + 5-amino-1-(5-phospho-beta-D-ribosyl)imidazole-4-carboxamide = 5-formamido-1-(5-phospho-D-ribosyl)imidazole-4-carboxamide + (6S)-5,6,7,8-tetrahydrofolate. It carries out the reaction IMP + H2O = 5-formamido-1-(5-phospho-D-ribosyl)imidazole-4-carboxamide. The protein operates within purine metabolism; IMP biosynthesis via de novo pathway; 5-formamido-1-(5-phospho-D-ribosyl)imidazole-4-carboxamide from 5-amino-1-(5-phospho-D-ribosyl)imidazole-4-carboxamide (10-formyl THF route): step 1/1. It participates in purine metabolism; IMP biosynthesis via de novo pathway; IMP from 5-formamido-1-(5-phospho-D-ribosyl)imidazole-4-carboxamide: step 1/1. The chain is Bifunctional purine biosynthesis protein PurH from Xanthomonas oryzae pv. oryzae (strain PXO99A).